The chain runs to 683 residues: DNA ligase (683 aa).

NAD(+)-binding positions include 35–39 (DAEYD), 81–82 (SL), and Glu-112. The N6-AMP-lysine intermediate role is filled by Lys-114. NAD(+) contacts are provided by Arg-135, Glu-170, Lys-277, and Lys-301. Residues Cys-395, Cys-398, Cys-411, and Cys-417 each contribute to the Zn(2+) site. Positions 601–683 (SSNSVLNNKV…YRMINSEVSE (83 aa)) constitute a BRCT domain.

This sequence belongs to the NAD-dependent DNA ligase family. LigA subfamily. Requires Mg(2+) as cofactor. Mn(2+) serves as cofactor.

The catalysed reaction is NAD(+) + (deoxyribonucleotide)n-3'-hydroxyl + 5'-phospho-(deoxyribonucleotide)m = (deoxyribonucleotide)n+m + AMP + beta-nicotinamide D-nucleotide.. Functionally, DNA ligase that catalyzes the formation of phosphodiester linkages between 5'-phosphoryl and 3'-hydroxyl groups in double-stranded DNA using NAD as a coenzyme and as the energy source for the reaction. It is essential for DNA replication and repair of damaged DNA. The chain is DNA ligase from Wolbachia sp. subsp. Brugia malayi (strain TRS).